Reading from the N-terminus, the 528-residue chain is Peptide chain release factor 3 (528 aa).

The tr-type G domain maps to 9–280 (RRRRTFAIIS…LKLAPAPAPR (272 aa)). Residues 18-25 (SHPDAGKT), 86-90 (DTPGH), and 140-143 (NKLD) each bind GTP.

This sequence belongs to the TRAFAC class translation factor GTPase superfamily. Classic translation factor GTPase family. PrfC subfamily.

The protein localises to the cytoplasm. Functionally, increases the formation of ribosomal termination complexes and stimulates activities of RF-1 and RF-2. It binds guanine nucleotides and has strong preference for UGA stop codons. It may interact directly with the ribosome. The stimulation of RF-1 and RF-2 is significantly reduced by GTP and GDP, but not by GMP. This is Peptide chain release factor 3 from Symbiobacterium thermophilum (strain DSM 24528 / JCM 14929 / IAM 14863 / T).